We begin with the raw amino-acid sequence, 221 residues long: MGRRPARCYRQIKGKPYPKSRYCRGVPDPKIRIYDVGMKRKGVDEFPFCVHLVSWEKENVSSEALEAARIACNKYMVKSAGKDAFHLRIRVHPFHVLRINKMLSCAGADRLQTGMRGAFGKALGTCARVAIGQVLLSVRCKDNHGVHAQEALRRAKFKFPGRQKIIVSRKWGFTKFNRAEYTKLRAMKRIVPDGVNAKFLSNHGPLANRQPGSAFISATSE.

This sequence belongs to the universal ribosomal protein uL16 family. Component of the small ribosomal subunit. Mature ribosomes consist of a small (40S) and a large (60S) subunit. The 40S subunit contains about 33 different proteins and 1 molecule of RNA (18S). The 60S subunit contains about 49 different proteins and 3 molecules of RNA (25S, 5.8S and 5S).

This Arabidopsis thaliana (Mouse-ear cress) protein is Large ribosomal subunit protein uL16x (RPL10C).